A 1302-amino-acid polypeptide reads, in one-letter code: DNA-directed RNA polymerase subunit beta (1302 aa).

The protein belongs to the RNA polymerase beta chain family. The RNAP catalytic core consists of 2 alpha, 1 beta, 1 beta' and 1 omega subunit. When a sigma factor is associated with the core the holoenzyme is formed, which can initiate transcription.

The catalysed reaction is RNA(n) + a ribonucleoside 5'-triphosphate = RNA(n+1) + diphosphate. Functionally, DNA-dependent RNA polymerase catalyzes the transcription of DNA into RNA using the four ribonucleoside triphosphates as substrates. The chain is DNA-directed RNA polymerase subunit beta from Spiroplasma citri.